Here is a 496-residue protein sequence, read N- to C-terminus: MKFSLAISFFILMSLLFEDACAKEKSSKKGKGKKKQYLCPSQQSPEDLARVPPNSTSNILNRLLVSYDPRIRPNFKGIPVDVVVNIFINSFGSIQETTMDYRVNIFLRQKWNDPRLKLPSDFRGSDALTVDPTMYKCLWKPDLFFANEKSANFHDVTQENILLFIFRDGDVLVSMRLSITLSCPLDLTLFPMDTQRCKMQLESFGYTTDDLRFIWQSGDPVQLEKIALPQFDIKKEDIEYGNCTKYYKGTGYYTCVEVIFTLRRQVGFYMMGVYAPTLLIVVLSWLSFWINPDASAARVPLGIFSVLSLASECTTLAAELPKVSYVKALDVWLIACLLFGFASLVEYAVVQVMLNNPKRVEAEKARIAKAEQADGKGGNAAKKNTVNGTGTPVHISTLQVGETRCKKVCTSKSDLRSNDFSIVGSLPRDFELSNYDCYGKPIEVNNGLGKPQAKNKKPPPAKPVIPTAAKRIDLYARALFPFCFLFFNVIYWSIYL.

Positions 1 to 22 (MKFSLAISFFILMSLLFEDACA) are cleaved as a signal peptide. Residues 23–268 (KEKSSKKGKG…IFTLRRQVGF (246 aa)) are Extracellular-facing. Positions 32 to 53 (GKKKQYLCPSQQSPEDLARVPP) are disordered. A glycan (N-linked (GlcNAc...) asparagine) is linked at N54. 2 residues coordinate glycine: R108 and S174. A disulfide bridge connects residues C183 and C197. An N-linked (GlcNAc...) asparagine glycan is attached at N242. C243 and C255 are joined by a disulfide. Residue T250 participates in glycine binding. Residues 269–289 (YMMGVYAPTLLIVVLSWLSFW) traverse the membrane as a helical segment. Topologically, residues 290-294 (INPDA) are cytoplasmic. The chain crosses the membrane as a helical span at residues 295 to 315 (SAARVPLGIFSVLSLASECTT). At 316–327 (LAAELPKVSYVK) the chain is on the extracellular side. Residues 328 to 349 (ALDVWLIACLLFGFASLVEYAV) traverse the membrane as a helical segment. Topologically, residues 350–471 (VQVMLNNPKR…KPVIPTAAKR (122 aa)) are cytoplasmic. The residue at position 391 (T391) is a Phosphothreonine. A helical membrane pass occupies residues 472–495 (IDLYARALFPFCFLFFNVIYWSIY). L496 is a topological domain (extracellular).

It belongs to the ligand-gated ion channel (TC 1.A.9) family. Glycine receptor (TC 1.A.9.3) subfamily. GLRB sub-subfamily. Forms heteropentamers with glycin receptor alpha subunits. Heteropentamers with GLRA1 can be composed of two GLRA1 and three GLRB subunits, or three GLRA1 and two GLRB subunits, or four GLRA1 subunits and one GLRB subunit. Forms heteropentamers with GLRA2. Functional GLRB-GLRA2 heteropentamers contain four GLRA2 subunits and one GLRB subunit, although alternative subunit composition cannot be excluded. Forms a heteropentamer with GLRA3. Interacts with GPHN. Detected in spinal cord, brain and brain stem, especially in the periolivary region, spinal nuclei, trigeminal nucleus, medulla oblongata, pons and midbrain. Detected in the inner plexiform layer of the retina (at protein level). High levels of expression in cortex, hippocampus, thalamus and cerebellum. Detected in spinal cord.

It localises to the postsynaptic cell membrane. It is found in the synapse. The protein resides in the cell projection. Its subcellular location is the dendrite. The protein localises to the cell membrane. It localises to the cytoplasm. The enzyme catalyses chloride(in) = chloride(out). Its activity is regulated as follows. Channel opening is triggered by extracellular glycine. Heteropentameric channels composed of GLRB and GLRA1 are activated by lower glycine levels than homopentameric GLRA1. Functionally, subunit of heteromeric glycine-gated chloride channels. Plays an important role in the down-regulation of neuronal excitability. Contributes to the generation of inhibitory postsynaptic currents. This chain is Glycine receptor subunit beta (Glrb), found in Mus musculus (Mouse).